We begin with the raw amino-acid sequence, 270 residues long: MPELPEVETTLKGVSPYLKGFIIEKIVVRNPKLRWEVSKELSTFKHVKILNLTRRAKYLIIHTEQGYIIGHLGMSGSVRIVPHDNPVNKHDHFDIVMNNGKLLRYNDARRFGAWLWTNNLSEFHLFFKLGPEPLSETFNSTYLFKKSRQKSTALKTFLMDNSVVVGVGNIYANEILFLCGLHPQKIAKTLTKKQTEQLVFTIKQVLNEAIEQGGTTLKDFLQPDGRPGYFAQKLLVYGNKDKPCPRCGTKIKSIIIGQRNSFFCPQCQKK.

Residue proline 2 is the Schiff-base intermediate with DNA of the active site. The active-site Proton donor is glutamate 3. The active-site Proton donor; for beta-elimination activity is lysine 57. Residues histidine 90, arginine 109, and lysine 150 each contribute to the DNA site. The FPG-type zinc-finger motif lies at 235-269 (LVYGNKDKPCPRCGTKIKSIIIGQRNSFFCPQCQK). Arginine 259 (proton donor; for delta-elimination activity) is an active-site residue.

It belongs to the FPG family. In terms of assembly, monomer. Requires Zn(2+) as cofactor.

It catalyses the reaction Hydrolysis of DNA containing ring-opened 7-methylguanine residues, releasing 2,6-diamino-4-hydroxy-5-(N-methyl)formamidopyrimidine.. The catalysed reaction is 2'-deoxyribonucleotide-(2'-deoxyribose 5'-phosphate)-2'-deoxyribonucleotide-DNA = a 3'-end 2'-deoxyribonucleotide-(2,3-dehydro-2,3-deoxyribose 5'-phosphate)-DNA + a 5'-end 5'-phospho-2'-deoxyribonucleoside-DNA + H(+). Functionally, involved in base excision repair of DNA damaged by oxidation or by mutagenic agents. Acts as a DNA glycosylase that recognizes and removes damaged bases. Has a preference for oxidized purines, such as 7,8-dihydro-8-oxoguanine (8-oxoG). Has AP (apurinic/apyrimidinic) lyase activity and introduces nicks in the DNA strand. Cleaves the DNA backbone by beta-delta elimination to generate a single-strand break at the site of the removed base with both 3'- and 5'-phosphates. The protein is Formamidopyrimidine-DNA glycosylase of Histophilus somni (strain 2336) (Haemophilus somnus).